The primary structure comprises 356 residues: MSRFWSQVVRDLTPYVPGEQPKIANLIKLNTNENPFPPSPRVVAAIQAELGDDAARLRLYPDPNADLLKAAVARRHTVSAQQVFVGNGSDEVLAHIFMALLKHDQPIIFPDITYSFYPVYCGLYGVEYQTLPLADDFSINPADYCDRPNGGIIFPNPNAPTGRLLPLDAIEQMLKANPDSVVVVDEAYVDFGGETAISLVDRYDNLLVVHTLSKSRSLAGMRVGFAVGHAALIEALERVKNSFNSYPLDRLAIVAAVAAMEDEAYFAQCCHAVMATRNTLTAELTELGFEVLPSTANFIFTRHPQRDAAELAKALRERNIIVRHFKLPRIDQFLRITVGTDGECKALTDALRQITG.

K214 bears the N6-(pyridoxal phosphate)lysine mark.

This sequence belongs to the class-II pyridoxal-phosphate-dependent aminotransferase family. Histidinol-phosphate aminotransferase subfamily. In terms of assembly, homodimer. Pyridoxal 5'-phosphate is required as a cofactor.

The enzyme catalyses L-histidinol phosphate + 2-oxoglutarate = 3-(imidazol-4-yl)-2-oxopropyl phosphate + L-glutamate. It functions in the pathway amino-acid biosynthesis; L-histidine biosynthesis; L-histidine from 5-phospho-alpha-D-ribose 1-diphosphate: step 7/9. The protein is Histidinol-phosphate aminotransferase 2 of Dechloromonas aromatica (strain RCB).